Reading from the N-terminus, the 885-residue chain is Chromatin assembly factor 1 subunit A-B (885 aa).

Disordered stretches follow at residues 1-24, 115-157, 176-361, and 536-605; these read MPGK…KMVQ, EDSN…NEEC, LDKP…EEEK, and VDSD…QKLK. A compositionally biased stretch (low complexity) spans 12-21; that stretch reads KSSTKSNTKK. Composition is skewed to polar residues over residues 116 to 128, 134 to 157, and 182 to 193; these read DSNI…SPLN, QLAN…NEEC, and SAASCTSVSNFS. Low complexity-rich tracts occupy residues 211-227 and 237-254; these read VSVS…SPDV and SSPS…SNKT. Positions 251-376 form a coiled coil; it reads SNKTSAEKKK…KAEITRFLQK (126 aa). Over residues 255-361 the composition is skewed to basic and acidic residues; that stretch reads SAEKKKTKDK…EEKRLKEEEK (107 aa). Composition is skewed to acidic residues over residues 536 to 548 and 557 to 573; these read VDSD…EEPG and ENED…DDDG. The necessary for homodimerization, competence for chromatin assembly stretch occupies residues 629-665; sequence CVWCDSKASEIRLLQKFSACILESPAVEEELTQDISS.

The protein belongs to the CHAF1A family. In terms of assembly, homodimer.

The protein localises to the nucleus. Its function is as follows. Involved in chromatin assembly in DNA replication and DNA repair. The polypeptide is Chromatin assembly factor 1 subunit A-B (chaf1a-b) (Xenopus laevis (African clawed frog)).